The chain runs to 354 residues: Ubiquinol oxidase 1a, mitochondrial (354 aa).

A mitochondrion-targeting transit peptide spans 1 to 62; that stretch reads MMITRGGAKA…RAPTIGGMRF (62 aa). Residues 68–99 are disordered; the sequence is LGEKTPMKEEDANQKKTENESTGGDAAGGNNK. Residues 72-86 show a composition bias toward basic and acidic residues; that stretch reads TPMKEEDANQKKTEN. Residues 179 to 199 form a helical membrane-spanning segment; that stretch reads AMMLETVAAVPGMVGGMLLHC. Fe cation is bound by residues E183, E222, and H225. The chain crosses the membrane as a helical span at residues 241 to 261; that stretch reads ALVITVQGVFFNAYFLGYLIS. The Fe cation site is built by E273, E324, and H327.

This sequence belongs to the alternative oxidase family. In terms of assembly, homodimer; disulfide-linked. It depends on Fe cation as a cofactor. Expressed in roots, stems, cotyledons, leaves and flowers. High expression in sepals.

It localises to the mitochondrion inner membrane. The enzyme catalyses 2 a ubiquinol + O2 = 2 a ubiquinone + 2 H2O. When the two monomeric subunits are covalently linked by a S-S bond, the enzyme is essentially inactive. When the disulfide bond is reduced, its component sulfhydryls can associate with K-keto acids through formation of a thiohemiacetal, resulting in enzyme activation. Activated by glyoxylate, irrespective to the substitution found at Cys-127. That suggests the presence of a second activation site, possibly Cys-177. Functionally, catalyzes the cyanide-resistant oxidation of ubiquinol and the reduction of molecular oxygen to water, but does not translocate protons and consequently is not linked to oxidative phosphorylation. Increases respiration when the cytochrome respiratory pathway is restricted, or in response to low temperatures. The sequence is that of Ubiquinol oxidase 1a, mitochondrial (AOX1A) from Arabidopsis thaliana (Mouse-ear cress).